The primary structure comprises 159 residues: 17 kDa surface antigen (159 aa).

The N-terminal stretch at 1 to 19 (MKLLSKIMIIALATSMLQA) is a signal peptide. Cysteine 20 is lipidated: N-palmitoyl cysteine. Cysteine 20 is lipidated: S-diacylglycerol cysteine.

This sequence belongs to the rickettsiale 17 kDa surface antigen family.

It is found in the cell outer membrane. The sequence is that of 17 kDa surface antigen (omp) from Rickettsia japonica (strain ATCC VR-1363 / YH).